A 158-amino-acid chain; its full sequence is HTH-type transcriptional repressor NicR (158 aa).

One can recognise an HTH marR-type domain in the interval 20 to 152 (TEQVGHLLRK…ILYLLRKMID (133 aa)). The segment at residues 66–89 (QAELIKATAVDQATIRGIVERLKA) is a DNA-binding region (H-T-H motif).

The protein operates within cofactor degradation; nicotinate degradation [regulation]. Transcriptional repressor for the nicCDEFTP and nicXR operons, encoding the lower aerobic nicotinate degradation pathway. Acts under non-induced conditions: repression of the nicCDEFTP and nicXR operons becomes alleviated in presence of 6-hydroxynicotinate (6HNA). This Pseudomonas putida (strain ATCC 47054 / DSM 6125 / CFBP 8728 / NCIMB 11950 / KT2440) protein is HTH-type transcriptional repressor NicR (nicR).